The primary structure comprises 1197 residues: Serine/threonine-protein kinase pakA (1197 aa).

Disordered regions lie at residues 1 to 96 (MEEK…PIYR), 328 to 383 (QKED…KNID), 430 to 468 (REEE…EQRN), 485 to 543 (EEEE…NLMG), and 562 to 819 (NSSG…RVGT). Basic and acidic residues predominate over residues 19 to 30 (QKFEQFLDKTDK). Polar residues predominate over residues 34–49 (ATRNNYRGPVSSSTGI). Over residues 51–69 (NDKEKKSHSYFKVREEGSN) the composition is skewed to basic and acidic residues. Polar residues predominate over residues 70-79 (KRPSSFSASN). Composition is skewed to low complexity over residues 80 to 94 (PITP…SSPI) and 346 to 381 (NNNN…NNKN). Over residues 439–458 (RVERELASRRRQEEDRIKRE) the composition is skewed to basic and acidic residues. Low complexity predominate over residues 494 to 523 (SQLQSSQQQQKSSSTQRSSNTVTSTSSSST). Positions 524 to 536 (GGDSNPSTSQKPT) are enriched in polar residues. Phosphothreonine; by PKB is present on Thr585. Residues 593-615 (SENTPLVSSIDNNGVNNKMSRSH) are compositionally biased toward polar residues. Composition is skewed to low complexity over residues 636 to 653 (NVNN…NNNH) and 671 to 707 (SSSM…SSPT). Over residues 718 to 727 (TTSTGSTRKG) the composition is skewed to polar residues. The segment covering 728–737 (SISEREDKKK) has biased composition (basic and acidic residues). Over residues 739 to 756 (SSSSTSSSSSSNGGLSSS) the composition is skewed to low complexity. Basic and acidic residues predominate over residues 757 to 790 (GKDHKKDHSSEEKEKEKKSFFNKLFSKEKKDHHS). In terms of domain architecture, CRIB spans 817–830 (VGTPFNVKHDVHVN). The region spanning 911 to 1164 (YYNINKIGEG…SSSLLHHPFL (254 aa)) is the Protein kinase domain. ATP is bound by residues 917–925 (IGEGGAGEV) and Lys940. Catalysis depends on Asp1032, which acts as the Proton acceptor.

This sequence belongs to the protein kinase superfamily. STE Ser/Thr protein kinase family. STE20 subfamily. It depends on Mg(2+) as a cofactor. Phosphorylation on Thr-585 results in cAMP-mediated activation and localization to the cytoskeleton. Colocalizes with myosin II to the cleavage furrow of cells undergoing cytokinesis and the posterior cortex of polarized cells.

The protein resides in the cytoplasm. It is found in the cytosol. Its subcellular location is the cytoskeleton. The enzyme catalyses L-seryl-[protein] + ATP = O-phospho-L-seryl-[protein] + ADP + H(+). It carries out the reaction L-threonyl-[protein] + ATP = O-phospho-L-threonyl-[protein] + ADP + H(+). Functionally, regulator of the myosin II component of the cytoskeleton: required for regulation of cytokinesis. Functions during chemotaxis, required for maintaining the direction of cell movement, suppressing lateral pseudopod extension, and proper retraction of the posterior of chemotaxing cells. In Dictyostelium discoideum (Social amoeba), this protein is Serine/threonine-protein kinase pakA (pakA).